The sequence spans 108 residues: uncharacterized protein (108 aa).

3 helical membrane passes run Leu-24 to Leu-44, Ala-55 to Met-75, and Arg-88 to Ile-108.

It to cation A.eutrophus efflux system protein CzcD.

The protein localises to the cell membrane. This is an uncharacterized protein from Geobacillus stearothermophilus (Bacillus stearothermophilus).